The primary structure comprises 62 residues: Potassium channel toxin alpha-KTx 22.1 (62 aa).

The N-terminal stretch at 1 to 18 (MQKLFIVFVLFCILRLDA) is a signal peptide. Cystine bridges form between C28–C46, C33–C59, and C37–C61.

It belongs to the short scorpion toxin superfamily. Potassium channel inhibitor family. Alpha-KTx 22 subfamily. In terms of tissue distribution, expressed by the venom gland.

Its subcellular location is the secreted. May block potassium channels. The protein is Potassium channel toxin alpha-KTx 22.1 of Olivierus martensii (Manchurian scorpion).